The sequence spans 447 residues: Glutamine synthetase (447 aa).

The GS beta-grasp domain maps to 20-105 (RDVKFIRTQF…ILGDVYLPDG (86 aa)). The GS catalytic domain occupies 112 to 447 (PRYVLKTAIK…WELSRYLSML (336 aa)). Mg(2+)-binding residues include Glu135 and Glu137. ATP is bound at residue Glu187. Residues Glu192 and Glu199 each contribute to the Mg(2+) site. Residues 243 to 244 (NG) and Gly244 contribute to the L-glutamate site. His248 lines the Mg(2+) pocket. Position 252 (Ser252) interacts with ATP. L-glutamate contacts are provided by Arg301, Glu307, and Arg319. Residues Arg319 and Arg324 each contribute to the ATP site. Glu336 is a Mg(2+) binding site. Position 338 (Arg338) interacts with L-glutamate.

Belongs to the glutamine synthetase family. As to quaternary structure, homohexamer. Interacts and forms stable complexes with the regulatory protein GlnK1. It depends on Mg(2+) as a cofactor.

The protein localises to the cytoplasm. It carries out the reaction L-glutamate + NH4(+) + ATP = L-glutamine + ADP + phosphate + H(+). Its activity is regulated as follows. Directly stimulated by the effector molecule 2-oxoglutarate. Inhibited by GlnK1. 2-oxoglutarate antagonizes the inhibitory effects of GlnK1, but does not prevent GlnK1/GlnA1 complex formation. Its function is as follows. Probably involved in nitrogen metabolism via ammonium assimilation. Catalyzes the ATP-dependent biosynthesis of glutamine from glutamate and ammonia. This chain is Glutamine synthetase, found in Methanosarcina mazei (strain ATCC BAA-159 / DSM 3647 / Goe1 / Go1 / JCM 11833 / OCM 88) (Methanosarcina frisia).